A 187-amino-acid polypeptide reads, in one-letter code: Small ribosomal subunit protein uS7 (187 aa).

The protein belongs to the universal ribosomal protein uS7 family. As to quaternary structure, part of the 30S ribosomal subunit.

In terms of biological role, one of the primary rRNA binding proteins, it binds directly to 16S rRNA where it nucleates assembly of the head domain of the 30S subunit. Is located at the subunit interface close to the decoding center. This is Small ribosomal subunit protein uS7 from Picrophilus torridus (strain ATCC 700027 / DSM 9790 / JCM 10055 / NBRC 100828 / KAW 2/3).